A 374-amino-acid chain; its full sequence is UDP-N-acetylglucosamine--N-acetylmuramyl-(pentapeptide) pyrophosphoryl-undecaprenol N-acetylglucosamine transferase (374 aa).

UDP-N-acetyl-alpha-D-glucosamine-binding positions include 13–15, Asn124, Arg165, Ser193, and Gln294; that span reads TGG.

This sequence belongs to the glycosyltransferase 28 family. MurG subfamily.

The protein resides in the cell inner membrane. It catalyses the reaction di-trans,octa-cis-undecaprenyl diphospho-N-acetyl-alpha-D-muramoyl-L-alanyl-D-glutamyl-meso-2,6-diaminopimeloyl-D-alanyl-D-alanine + UDP-N-acetyl-alpha-D-glucosamine = di-trans,octa-cis-undecaprenyl diphospho-[N-acetyl-alpha-D-glucosaminyl-(1-&gt;4)]-N-acetyl-alpha-D-muramoyl-L-alanyl-D-glutamyl-meso-2,6-diaminopimeloyl-D-alanyl-D-alanine + UDP + H(+). The protein operates within cell wall biogenesis; peptidoglycan biosynthesis. Cell wall formation. Catalyzes the transfer of a GlcNAc subunit on undecaprenyl-pyrophosphoryl-MurNAc-pentapeptide (lipid intermediate I) to form undecaprenyl-pyrophosphoryl-MurNAc-(pentapeptide)GlcNAc (lipid intermediate II). The sequence is that of UDP-N-acetylglucosamine--N-acetylmuramyl-(pentapeptide) pyrophosphoryl-undecaprenol N-acetylglucosamine transferase from Sinorhizobium medicae (strain WSM419) (Ensifer medicae).